A 204-amino-acid polypeptide reads, in one-letter code: Ribonuclease HII (204 aa).

Positions 14–204 constitute an RNase H type-2 domain; that stretch reads QYICGVDEVG…SFKLSCLGEK (191 aa). Positions 20, 21, and 116 each coordinate a divalent metal cation.

This sequence belongs to the RNase HII family. It depends on Mn(2+) as a cofactor. The cofactor is Mg(2+).

It is found in the cytoplasm. The catalysed reaction is Endonucleolytic cleavage to 5'-phosphomonoester.. Its function is as follows. Endonuclease that specifically degrades the RNA of RNA-DNA hybrids. The chain is Ribonuclease HII from Chloroherpeton thalassium (strain ATCC 35110 / GB-78).